The chain runs to 215 residues: Cytochrome c biogenesis ATP-binding export protein CcmA (215 aa).

Residues 3 to 211 (LTAEILAARR…KMTGFAGVDN (209 aa)) enclose the ABC transporter domain. 35–42 (GKNGSGKS) is a binding site for ATP.

It belongs to the ABC transporter superfamily. CcmA exporter (TC 3.A.1.107) family. As to quaternary structure, the complex is composed of two ATP-binding proteins (CcmA) and two transmembrane proteins (CcmB).

The protein localises to the cell inner membrane. It catalyses the reaction heme b(in) + ATP + H2O = heme b(out) + ADP + phosphate + H(+). Functionally, part of the ABC transporter complex CcmAB involved in the biogenesis of c-type cytochromes; once thought to export heme, this seems not to be the case, but its exact role is uncertain. Responsible for energy coupling to the transport system. This Rhizobium johnstonii (strain DSM 114642 / LMG 32736 / 3841) (Rhizobium leguminosarum bv. viciae) protein is Cytochrome c biogenesis ATP-binding export protein CcmA.